The chain runs to 292 residues: ATP synthase gamma chain (292 aa).

Belongs to the ATPase gamma chain family. As to quaternary structure, F-type ATPases have 2 components, CF(1) - the catalytic core - and CF(0) - the membrane proton channel. CF(1) has five subunits: alpha(3), beta(3), gamma(1), delta(1), epsilon(1). CF(0) has three main subunits: a, b and c.

The protein localises to the cell inner membrane. Produces ATP from ADP in the presence of a proton gradient across the membrane. The gamma chain is believed to be important in regulating ATPase activity and the flow of protons through the CF(0) complex. This chain is ATP synthase gamma chain, found in Chlorobaculum parvum (strain DSM 263 / NCIMB 8327) (Chlorobium vibrioforme subsp. thiosulfatophilum).